Reading from the N-terminus, the 585-residue chain is Pyruvate kinase (585 aa).

Arg-32 is a binding site for substrate. K(+)-binding residues include Asn-34, Ser-36, Asp-66, and Thr-67. 34–37 (NFSH) serves as a coordination point for ATP. 2 residues coordinate ATP: Arg-73 and Lys-156. Position 221 (Glu-221) interacts with Mg(2+). 3 residues coordinate substrate: Gly-244, Asp-245, and Thr-277. Asp-245 contacts Mg(2+).

The protein belongs to the pyruvate kinase family. It in the C-terminal section; belongs to the PEP-utilizing enzyme family. Mg(2+) is required as a cofactor. K(+) serves as cofactor.

The enzyme catalyses pyruvate + ATP = phosphoenolpyruvate + ADP + H(+). The protein operates within carbohydrate degradation; glycolysis; pyruvate from D-glyceraldehyde 3-phosphate: step 5/5. In Staphylococcus aureus (strain USA300), this protein is Pyruvate kinase (pyk).